The primary structure comprises 165 residues: MASTSSFDVVSDFDRQELVNTLDQVRRDVGNRYDLKDSNTEIQLEETELVITTASDMTLQAVEDVLRAKATKRNLSLKIFDFQTPESVGGNRVKQVVKLRKGLSQEIAKKLSKIVRDELKKVTVAIQGESVRITGKSKDDLQAAIQLVKSKEDELDVPLQFENYR.

The protein belongs to the YajQ family.

Nucleotide-binding protein. This Parasynechococcus marenigrum (strain WH8102) protein is Nucleotide-binding protein SYNW1816.